A 151-amino-acid chain; its full sequence is UPF0178 protein YaiI (151 aa).

It belongs to the UPF0178 family.

This is UPF0178 protein YaiI from Salmonella paratyphi B (strain ATCC BAA-1250 / SPB7).